A 45-amino-acid chain; its full sequence is Amphipathic peptide Hj0164 (45 aa).

An N-terminal signal peptide occupies residues 1–23; that stretch reads MKSQAFFLLFLVVLLLATTQSEA. Position 33 is a phenylalanine amide (F33). A propeptide spanning residues 37–45 is cleaved from the precursor; the sequence is SLRDVDTMK.

Belongs to the non-disulfide-bridged peptide (NDBP) superfamily. Short antimicrobial peptide (group 4) family. As to expression, expressed by the venom gland.

It localises to the secreted. Its subcellular location is the target cell membrane. Its function is as follows. Amphipathic peptide that shows antibacterial activities. The chain is Amphipathic peptide Hj0164 from Hottentotta judaicus (Black scorpion).